Reading from the N-terminus, the 384-residue chain is Involucrin (384 aa).

The segment at 1–384 (MSQQHTLPVT…LPEQPQEPEV (384 aa)) is disordered. Composition is skewed to basic and acidic residues over residues 56–65 (PSKHEEKGTD) and 80–134 (PELH…ELHL). Positions 137-146 (QQQQESQEQE) are enriched in low complexity. A compositionally biased stretch (basic and acidic residues) spans 179-208 (KQREPQESQEQRLHLGKEQESQEQRLHLGE). The span at 239-267 (PEQRLQLLPQGPQEQELHLGKQQQQQESQ) shows a compositional bias: low complexity. Basic and acidic residues-rich tracts occupy residues 268 to 308 (QHQE…KKLL) and 315 to 336 (EAVKRHEQLQRDEQFGMKKEQL).

The protein belongs to the involucrin family. As to quaternary structure, directly or indirectly cross-linked to cornifelin (CNFN). Post-translationally, substrate of transglutaminase. Specific glutamines or lysines are cross-linked to keratins, desmoplakin and to inter involucrin molecules. In terms of tissue distribution, keratinocytes of epidermis and other stratified squamous epithelia.

It localises to the cytoplasm. In terms of biological role, part of the insoluble cornified cell envelope (CE) of stratified squamous epithelia. This is Involucrin (IVL) from Otolemur crassicaudatus (Brown greater galago).